A 729-amino-acid chain; its full sequence is Ubiquitin carboxyl-terminal hydrolase BAP1 (729 aa).

Residues 4–235 (GWLELESDPG…IRFNLMAVVP (232 aa)) enclose the UCH catalytic domain. The short motif at 56–60 (RRSRR) is the Arg-finger motif element. C91 functions as the Nucleophile in the catalytic mechanism. The Proton donor role is filled by H169. At S292 the chain carries Phosphoserine. The segment at 301-351 (APAASEGNHTDGAEEAAGSCAQAPSHSPPNKPKLVVKPPGSSLNGVHPNPT) is disordered. The short motif at 363-366 (NHNY) is the HBM-like motif element. S369 and S395 each carry phosphoserine. Disordered stretches follow at residues 372–435 (QEEE…SADG) and 464–524 (SIKT…SPVT). Over residues 395–409 (SDDEDDYEDDEEDDV) the composition is skewed to acidic residues. A compositionally biased stretch (polar residues) spans 480 to 524 (THSQPSPTPSNESTDTASEIGSAFNSPLRSPIRSANPTRPSSPVT). At T493 the chain carries Phosphothreonine. A phosphoserine mark is found at S521, S537, S585, and S597. Residues 575 to 623 (LTEGGKGSSPSIRPIQGSQGSSSPVEKEVVEATDSREKTGMVRPGEPLS) are disordered. Residues 582-598 (SSPSIRPIQGSQGSSSP) show a composition bias toward polar residues. The interaction with BRCA1 stretch occupies residues 596-721 (SSPVEKEVVE…QRKPDRRKRS (126 aa)). Positions 599-614 (VEKEVVEATDSREKTG) are enriched in basic and acidic residues. Residues 636–656 (LKCVEAEIANYEACLKEEVEK) are a coiled coil. The interaction with YY1 stretch occupies residues 642–686 (EIANYEACLKEEVEKRKKFKIDDQRRTHNYDEFICTFISMLAQEG). A ULD domain is found at 670 to 698 (NYDEFICTFISMLAQEGMLANLVEQNISV). The interaction with nucleosomal DNA forming a DNA clamp with ASXL1 stretch occupies residues 699–701 (RRR). The Classical bipartite Nuclear localization signal (NLS) motif lies at 699 to 722 (RRRQGVSIGRLHKQRKPDRRKRSR). The interval 703 to 729 (GVSIGRLHKQRKPDRRKRSRPYKAKRQ) is disordered. The positively charged C-terminal extension (CTE) stretch occupies residues 713 to 729 (RKPDRRKRSRPYKAKRQ). The short motif at 717–724 (RRKRSRPY) is the Non-classical PY-nuclear localization signal (PY-NLS) element.

It belongs to the peptidase C12 family. BAP1 subfamily. Core component of the polycomb repressive deubiquitinase (PR-DUB) complex, at least composed of BAP1, one of ASXL1, ASXL2 or (probably) ASXL3, and one of MBD5 or MBD6. The PR-DUB core associates with a number of accessory proteins, including FOXK1, FOXK2, KDM1B, HCFC1, YY1 and OGT; KDM1B specifically associates with ASXL2 PR-DUB complexes. The BAP1 deubiquitinase activity is not required for PR-DUB assembly. Homodimerizes (via coiled-coil hinge-region between the UCH and ULD domains) to mediate assembly of 2 copies of the BAP1-ASXL heterodimer into a bisymmetric tetramer; dimerization enhances association with nucleosomes. The PR-DUB complex associates with nucleosomes to mediate deubiquitination of 'lys-120' of histone H2AK118ub1 substrates; the association requires the positively charged C-terminal tail of BAP1. Interacts (via ULD domain) with ASXL1 (via DEUBAD domain); the interaction is direct and forms a ubiquitin binding cleft. The interaction with ASXL1 stabilizes BAP1 but is not required for nucleosome binding. Associates (via C-terminus) with nucleosome and chromatosome complexes through direct interaction with DNA and the histone3/4 dimer; this association displaces the histone-2A C-terminal tail, extending and orienting the H2AK118ub1 substrate towards the BAP1 deubiquitinase active site. Also interacts (via arginine finger) directly with the histone H2A-H2B acidic patch; this interaction is not critical for nucleosome-chromatosome association but may play a role in orienting the H2AK118ub1 substrate towards the PR-DUB complex active site. Interacts with BRCA1 (via the RING finger). Interacts (via HBM-like motif) with HCFC1. Interacts (via a C-terminal region overlapping the ULD domain) with YY1; the interaction is direct and requires the interaction with HCFC1. Interacts (when phosphorylated at Thr-493) with FOXK1. Interacts (when phosphorylated at Thr-493) with FOXK2; leading to recruitment of the PR-DUB complex and repression of FOXK2 target genes. Interacts (via non-classical PY-NLS) with TNPO1/transportin-1 (via HEAT repeats 8-12); the interaction is direct, mediates BAP1 nuclear localization and disrupts BAP1 homodimerization. Interacts (via C-terminus) with KPNA1/importin alpha5 and KPNA2/importin alpha1; these interactions can contribute to BAP1 nuclear localization but are less important than the interaction with TNPO1/transportin-1. The interaction with TNPO1/transportin-1 disrupts homodimerization and blocks ubiquitination by UBE2O. Ubiquitinated: monoubiquitinated at multiple sites within its nuclear localization signal (NLS) BY UBE2O, leading to cytoplasmic retention. Able to mediate autodeubiquitination via intramolecular interactions to counteract cytoplasmic retention. Monoubiquitinated on at least 4 sites near or within its PY-NLS. As to expression, highly expressed in testis, placenta and ovary. Expressed in breast. levels in the placenta increase over the course of pregnancy.

The protein localises to the cytoplasm. It is found in the nucleus. Its subcellular location is the chromosome. The enzyme catalyses Thiol-dependent hydrolysis of ester, thioester, amide, peptide and isopeptide bonds formed by the C-terminal Gly of ubiquitin (a 76-residue protein attached to proteins as an intracellular targeting signal).. Deubiquitinating enzyme that plays a key role in chromatin by mediating deubiquitination of histone H2A and HCFC1. Catalytic component of the polycomb repressive deubiquitinase (PR-DUB) complex, a complex that specifically mediates deubiquitination of histone H2A monoubiquitinated at 'Lys-120' (H2AK119ub1). Does not deubiquitinate monoubiquitinated histone H2B. The PR-DUB complex is an epigenetic regulator of gene expression and acts as a transcriptional coactivator, affecting genes involved in development, cell communication, signaling, cell proliferation and cell viability. Antagonizes PRC1 mediated H2AK119ub1 monoubiquitination. As part of the PR-DUB complex, associates with chromatin enriched in histone marks H3K4me1, H3K4me3, and H3K27Ac, but not in H3K27me3. Recruited to specific gene-regulatory regions by YY1. Acts as a regulator of cell growth by mediating deubiquitination of HCFC1 N-terminal and C-terminal chains, with some specificity toward 'Lys-48'-linked polyubiquitin chains compared to 'Lys-63'-linked polyubiquitin chains. Deubiquitination of HCFC1 does not lead to increase stability of HCFC1. Interferes with the BRCA1 and BARD1 heterodimer activity by inhibiting their ability to mediate ubiquitination and autoubiquitination. It however does not mediate deubiquitination of BRCA1 and BARD1. Able to mediate autodeubiquitination via intramolecular interactions to counteract monoubiquitination at the nuclear localization signal (NLS), thereby protecting it from cytoplasmic sequestration. Negatively regulates epithelial-mesenchymal transition (EMT) of trophoblast stem cells during placental development by regulating genes involved in epithelial cell integrity, cell adhesion and cytoskeletal organization. This chain is Ubiquitin carboxyl-terminal hydrolase BAP1, found in Homo sapiens (Human).